The chain runs to 235 residues: Large ribosomal subunit protein uL1 (235 aa).

This sequence belongs to the universal ribosomal protein uL1 family. In terms of assembly, part of the 50S ribosomal subunit.

In terms of biological role, binds directly to 23S rRNA. The L1 stalk is quite mobile in the ribosome, and is involved in E site tRNA release. Its function is as follows. Protein L1 is also a translational repressor protein, it controls the translation of the L11 operon by binding to its mRNA. The sequence is that of Large ribosomal subunit protein uL1 from Mycolicibacterium vanbaalenii (strain DSM 7251 / JCM 13017 / BCRC 16820 / KCTC 9966 / NRRL B-24157 / PYR-1) (Mycobacterium vanbaalenii).